Consider the following 305-residue polypeptide: Methionyl-tRNA formyltransferase (305 aa).

Residue 111-114 coordinates (6S)-5,6,7,8-tetrahydrofolate; it reads SLLP.

Belongs to the Fmt family.

It carries out the reaction L-methionyl-tRNA(fMet) + (6R)-10-formyltetrahydrofolate = N-formyl-L-methionyl-tRNA(fMet) + (6S)-5,6,7,8-tetrahydrofolate + H(+). Its function is as follows. Attaches a formyl group to the free amino group of methionyl-tRNA(fMet). The formyl group appears to play a dual role in the initiator identity of N-formylmethionyl-tRNA by promoting its recognition by IF2 and preventing the misappropriation of this tRNA by the elongation apparatus. The polypeptide is Methionyl-tRNA formyltransferase (Helicobacter acinonychis (strain Sheeba)).